A 293-amino-acid chain; its full sequence is Protein boule-like (293 aa).

The segment covering 1-16 (METESRAQSTNQTQTD) has biased composition (polar residues). Residues 1–39 (METESRAQSTNQTQTDSLSPSPNPVSPVPLNNPTSGPRY) are disordered. Residues S19, S21, and S26 each carry the phosphoserine modification. Positions 45 to 122 (NRIFVGGIDF…KKLNIGPAIR (78 aa)) constitute an RRM domain. The region spanning 172–196 (PSRSISSSPVMVAQPVYQQPAYHYQ) is the DAZ domain.

The protein belongs to the RRM DAZ family. In terms of assembly, interacts with DAZ1 and DAZL. Testis specific. Not expressed in early embryos, primoridal germ cells and spermatogonial cells. First expressed in the cytoplasm of spermatocytes and then persists through meiosis.

Its subcellular location is the cytoplasm. In terms of biological role, probable RNA-binding protein, which may be required during spermatogenesis. May act by binding to the 3'-UTR of mRNAs and regulating their translation. The sequence is that of Protein boule-like from Mus musculus (Mouse).